The primary structure comprises 566 residues: 4-hydroxy-7-methoxy-3-oxo-3,4-dihydro-2H-1,4-benzoxazin-2-yl glucoside beta-D-glucosidase 1, chloroplastic (566 aa).

The transit peptide at 1 to 54 (MAPLLAAAMNHAAAHPGLRSHLVGPNNESFSRHHLPSSSPQSSKRRCNLSFTTR) directs the protein to the chloroplast. The interval 17-47 (GLRSHLVGPNNESFSRHHLPSSSPQSSKRRC) is disordered. A beta-D-glucoside-binding positions include Q92, H196, and 244-245 (NE). The Proton donor role is filled by E245. A disulfide bridge connects residues C264 and C270. Residues 325–361 (SFLDKQAEERSWDINLGWFLEPVVRGDYPFSMRSLAR) form a dimerization region. Position 387 (Y387) interacts with a beta-D-glucoside. 2 dimerization regions span residues 394–405 (NIDISPNYSPVL) and 450–453 (KYGN). A beta-D-glucoside is bound by residues E460, W511, 518-519 (EW), and Y527. E460 (nucleophile) is an active-site residue.

Belongs to the glycosyl hydrolase 1 family. As to quaternary structure, homo- and heterodimer. In terms of tissue distribution, expressed in all seedling parts. Most abundant in the coleoptile.

It localises to the plastid. The protein localises to the chloroplast. It catalyses the reaction Hydrolysis of terminal, non-reducing beta-D-glucosyl residues with release of beta-D-glucose.. The enzyme catalyses DIMBOA beta-D-glucoside + H2O = DIMBOA + D-glucose. The catalysed reaction is DIBOA beta-D-glucoside + H2O = DIBOA + D-glucose. Reversibly inhibited by micromolar concentrations of Hg(2+) or Ag(+), but irreversibly inhibited by alkylation in presence of urea. Competitive inhibition by p-nitrophenyl beta-D-thioglucoside (pNPTGlc), glucotetrazole, and para-hydroxy-S-mandelonitrile beta-glucoside (dhurrin). Its function is as follows. Is implicated in many functions such as ABA metabolism, hydrolysis of conjugated gibberellins, conversion of storage forms of cytokinins to active forms. Also acts in defense of young plant parts against pests via the production of hydroxamic acids from hydroxamic acid glucosides. Enzymatic activity is highly correlated with plant growth. The preferred substrate is DIMBOA-beta-D-glucoside. Hydrolyzes the chromogenic substrate 6-bromo-2-naphthyl-beta-D-glucoside (6BNGlc) and various artificial aryl beta-glucosides. No activity with cellobiose, arbutin, gentiobiose, linamarin or dhurrin as substrates. The chain is 4-hydroxy-7-methoxy-3-oxo-3,4-dihydro-2H-1,4-benzoxazin-2-yl glucoside beta-D-glucosidase 1, chloroplastic (GLU1) from Zea mays (Maize).